Here is a 445-residue protein sequence, read N- to C-terminus: Baccatin III:3-amino-3-phenylpropanoyltransferase (445 aa).

It belongs to the plant acyltransferase family.

It catalyses the reaction (3R)-3-amino-3-phenylpropanoyl-CoA + baccatin III = 3'-N-debenzoyl-2'-deoxytaxol + CoA. Its pathway is alkaloid biosynthesis; taxol biosynthesis. Its function is as follows. Acyltransferase involved in taxol biosynthesis. Catalyzes the selective 13-O-acylation of baccatin III with (3R)-3-amino-3-phenylpropanoyl-CoA as the acyl donor to form 3'-N-debenzoyl-2'-deoxytaxol. In Taxus cuspidata (Japanese yew), this protein is Baccatin III:3-amino-3-phenylpropanoyltransferase.